The chain runs to 312 residues: Olfactory receptor 10D3 (312 aa).

Residues 1 to 26 (MEVKNCCMVTEFILLGIPHTEGLEMT) lie on the Extracellular side of the membrane. Residues 27-47 (LFVLFLPFYACTLLGNVSILV) traverse the membrane as a helical segment. Residues 48-57 (AVMSSARLHT) are Cytoplasmic-facing. The chain crosses the membrane as a helical span at residues 58-78 (PMYFFLGNLSVFDMGFSSVTC). Topologically, residues 79-97 (PKMLLYLMGLSRLISYKDC) are extracellular. A disulfide bridge connects residues C97 and C179. Residues 98–118 (VCQLFFFHFLGSIECFLFTVM) form a helical membrane-spanning segment. Over 119-139 (AYDRFTAICYPLRYTVIMNPR) the chain is Cytoplasmic. The chain crosses the membrane as a helical span at residues 140–160 (ICVALAVGTWLLGCIHSSILT). Residues 161–197 (SLTFTLPYCGPNEVDHFFCDIPALLPLACADTSLAQR) lie on the Extracellular side of the membrane. The chain crosses the membrane as a helical span at residues 198–218 (VSFTNVGLISLVCFLLILLSY). Residues 219–239 (TRITISILSIRTTEGRRRAFS) are Cytoplasmic-facing. Residues 240–260 (TCSAHLIAILCAYGPIITVYL) form a helical membrane-spanning segment. The Extracellular segment spans residues 261-266 (QPTPNP). Residues 267–287 (MLGTVVQILMNLVGPMLNPLI) traverse the membrane as a helical segment. The Cytoplasmic segment spans residues 288–312 (YTLRNKEVKTALKTILHRTGHVPES).

It belongs to the G-protein coupled receptor 1 family.

Its subcellular location is the cell membrane. Its function is as follows. Odorant receptor. The polypeptide is Olfactory receptor 10D3 (Homo sapiens (Human)).